The primary structure comprises 316 residues: N-acetyl-gamma-glutamyl-phosphate reductase (316 aa).

C136 is a catalytic residue.

Belongs to the NAGSA dehydrogenase family. Type 1 subfamily.

It localises to the cytoplasm. It catalyses the reaction N-acetyl-L-glutamate 5-semialdehyde + phosphate + NADP(+) = N-acetyl-L-glutamyl 5-phosphate + NADPH + H(+). The protein operates within amino-acid biosynthesis; L-arginine biosynthesis; N(2)-acetyl-L-ornithine from L-glutamate: step 3/4. In terms of biological role, catalyzes the NADPH-dependent reduction of N-acetyl-5-glutamyl phosphate to yield N-acetyl-L-glutamate 5-semialdehyde. The polypeptide is N-acetyl-gamma-glutamyl-phosphate reductase (Xanthomonas axonopodis pv. citri (strain 306)).